Reading from the N-terminus, the 539-residue chain is Chaperonin GroEL (539 aa).

ATP is bound by residues 30–33 (TLGP), Lys-51, 87–91 (DGTTT), Gly-415, 479–481 (NAA), and Asp-495.

This sequence belongs to the chaperonin (HSP60) family. Forms a cylinder of 14 subunits composed of two heptameric rings stacked back-to-back. Interacts with the co-chaperonin GroES.

The protein resides in the cytoplasm. It carries out the reaction ATP + H2O + a folded polypeptide = ADP + phosphate + an unfolded polypeptide.. Together with its co-chaperonin GroES, plays an essential role in assisting protein folding. The GroEL-GroES system forms a nano-cage that allows encapsulation of the non-native substrate proteins and provides a physical environment optimized to promote and accelerate protein folding. The polypeptide is Chaperonin GroEL (Kluyvera intermedia (Enterobacter intermedius)).